The chain runs to 545 residues: Chaperonin GroEL (545 aa).

ATP contacts are provided by residues 29–32 (TLGP), Lys-50, 86–90 (DGTTT), Gly-415, and Asp-495.

The protein belongs to the chaperonin (HSP60) family. In terms of assembly, forms a cylinder of 14 subunits composed of two heptameric rings stacked back-to-back. Interacts with the co-chaperonin GroES.

It is found in the cytoplasm. It catalyses the reaction ATP + H2O + a folded polypeptide = ADP + phosphate + an unfolded polypeptide.. Functionally, together with its co-chaperonin GroES, plays an essential role in assisting protein folding. The GroEL-GroES system forms a nano-cage that allows encapsulation of the non-native substrate proteins and provides a physical environment optimized to promote and accelerate protein folding. The sequence is that of Chaperonin GroEL from Porphyromonas gingivalis (strain ATCC BAA-308 / W83).